The following is a 469-amino-acid chain: Lactonohydrolase oryH (469 aa).

A signal peptide spans 1–20; the sequence is MYLSLRLVSLALCIAPLASA.

Belongs to the SMP-30/CGR1 family.

The protein operates within secondary metabolite biosynthesis. Lactonohydrolase; part of the gene cluster that mediates the biosynthesis of oryzines, natural products with an unusual maleidride backbone. The two subunits of the fungal fatty acid synthase oryfasA and oryfasB probably form octenoic acid. This fatty acid is most likely activated by the acyl-CoA ligase oryP to give octenyl-CoA before the citrate synthase-like protein oryE catalyzes condensation with oxaloacetate to form tricarboxylic acid. The next steps of the pathways are conjectural, but a favorite possible route has been proposed, beginning with decarboxylation and concomitant dehydration by the decarboxylase oryM, followed by tautomerization, which may lead to the production of a diene intermediate. Reduction of this diene intermediate could give the known metabolite piliformic acid. On the pathway to oryzine B and oryzine A, however, hydroxylation of the diene by the alpha-ketoglutarate-dependent dioxygenase oryG and lactonisation by the lactonohydrolases oryH or oryL could give oryzine B directly. Finally, enoyl reduction by the dehydrogenase oryD would then convert oryzine B into oryzine A. This chain is Lactonohydrolase oryH, found in Aspergillus oryzae (strain ATCC 42149 / RIB 40) (Yellow koji mold).